The following is a 345-amino-acid chain: D-fructose 1,6-bisphosphatase class 2/sedoheptulose 1,7-bisphosphatase (345 aa).

Mn(2+) contacts are provided by Asp33, Glu57, Asp97, and Glu100. Substrate contacts are provided by residues 100-102, Tyr131, 176-178, and 198-200; these read EGT, RDR, and DGD. Glu225 contacts Mn(2+).

The protein belongs to the FBPase class 2 family. As to quaternary structure, homotetramer. Mn(2+) serves as cofactor.

It carries out the reaction beta-D-fructose 1,6-bisphosphate + H2O = beta-D-fructose 6-phosphate + phosphate. It catalyses the reaction D-sedoheptulose 1,7-bisphosphate + H2O = D-sedoheptulose 7-phosphate + phosphate. It participates in carbohydrate biosynthesis; Calvin cycle. In terms of biological role, catalyzes the hydrolysis of fructose 1,6-bisphosphate (Fru 1,6-P2) and sedoheptulose 1,7-bisphosphate (Sed 1,7-P2) to fructose 6-phosphate and sedoheptulose 7-phosphate, respectively. This chain is D-fructose 1,6-bisphosphatase class 2/sedoheptulose 1,7-bisphosphatase, found in Nostoc sp. (strain PCC 7120 / SAG 25.82 / UTEX 2576).